A 274-amino-acid chain; its full sequence is Large ribosomal subunit protein uL2 (274 aa).

Residues 221-274 form a disordered region; it reads RGTAMNPVDHPHGGGEGKNFGKHPVTPWGVQTKGKKTRSNKRTDKFIVRRRSKK.

It belongs to the universal ribosomal protein uL2 family. In terms of assembly, part of the 50S ribosomal subunit. Forms a bridge to the 30S subunit in the 70S ribosome.

Functionally, one of the primary rRNA binding proteins. Required for association of the 30S and 50S subunits to form the 70S ribosome, for tRNA binding and peptide bond formation. It has been suggested to have peptidyltransferase activity; this is somewhat controversial. Makes several contacts with the 16S rRNA in the 70S ribosome. The chain is Large ribosomal subunit protein uL2 from Serratia proteamaculans (strain 568).